The chain runs to 100 residues: Urease subunit gamma (100 aa).

The protein belongs to the urease gamma subunit family. As to quaternary structure, heterotrimer of UreA (gamma), UreB (beta) and UreC (alpha) subunits. Three heterotrimers associate to form the active enzyme.

The protein localises to the cytoplasm. The catalysed reaction is urea + 2 H2O + H(+) = hydrogencarbonate + 2 NH4(+). It participates in nitrogen metabolism; urea degradation; CO(2) and NH(3) from urea (urease route): step 1/1. In Shewanella halifaxensis (strain HAW-EB4), this protein is Urease subunit gamma.